We begin with the raw amino-acid sequence, 147 residues long: Small ribosomal subunit protein bS6m (147 aa).

Belongs to the bacterial ribosomal protein bS6 family. In terms of assembly, component of the mitochondrial ribosome small subunit (28S) which comprises a 12S rRNA and about 30 distinct proteins.

Its subcellular location is the mitochondrion. The sequence is that of Small ribosomal subunit protein bS6m (mRpS6) from Drosophila melanogaster (Fruit fly).